The chain runs to 626 residues: 4-hydroxy-3-methylbut-2-en-1-yl diphosphate synthase (flavodoxin) (626 aa).

[4Fe-4S] cluster contacts are provided by Cys-521, Cys-524, Cys-555, and Glu-562.

It belongs to the IspG family. It depends on [4Fe-4S] cluster as a cofactor.

The catalysed reaction is (2E)-4-hydroxy-3-methylbut-2-enyl diphosphate + oxidized [flavodoxin] + H2O + 2 H(+) = 2-C-methyl-D-erythritol 2,4-cyclic diphosphate + reduced [flavodoxin]. It participates in isoprenoid biosynthesis; isopentenyl diphosphate biosynthesis via DXP pathway; isopentenyl diphosphate from 1-deoxy-D-xylulose 5-phosphate: step 5/6. Functionally, converts 2C-methyl-D-erythritol 2,4-cyclodiphosphate (ME-2,4cPP) into 1-hydroxy-2-methyl-2-(E)-butenyl 4-diphosphate. The polypeptide is 4-hydroxy-3-methylbut-2-en-1-yl diphosphate synthase (flavodoxin) (Bacteroides fragilis (strain ATCC 25285 / DSM 2151 / CCUG 4856 / JCM 11019 / LMG 10263 / NCTC 9343 / Onslow / VPI 2553 / EN-2)).